Here is a 243-residue protein sequence, read N- to C-terminus: Phomoidride biosynthesis cluster protein B (243 aa).

This sequence belongs to the tstB family.

In terms of biological role, phosphatidylethanolamine-binding protein; part of the gene cluster that mediates the biosynthesis of the antihypercholesterolemic agents phomoidrides which are dimeric anhydrides. Within the pathway, tstB is not essential for dimerization and its function has still to be determined. The pathway begins with the highly reducing polyketide synthase tstA that catalyzes the formation of a C12-fatty acyl-ACP, starting from one acetate and 5 malonate units. The hydrolase tstM is involved in the release of the C12-fatty acyl chain from phiA. The alkylcitrate synthase (ACS) tstJ and the alkylcitrate dehydratase (ACDH) tstI then give rise to decarboxylated monomeric anhydrides by coupling the C12-fatty acyl chain with oxalacetic acid. The cyclase tstC is responsible for the dimerization of the monomeric anhydrides which leads to the production of prephomoidride that contains the characteristic bicyclo[4.3.1]deca-1,6-diene system of phomoidrides. Iterative oxidation catalyzed by the alpha-ketoglutarate-dependent dioxygenase tstK produced then phomoidride A. Finally, the methyltransferase tstE converts phomoidride A to phomoidride B via an acetalization reaction. The phosphatidylethanolamine-binding protein tstB and tstN are not essential for dimerization and their functions have still to be determined. The sequence is that of Phomoidride biosynthesis cluster protein B from Talaromyces stipitatus (strain ATCC 10500 / CBS 375.48 / QM 6759 / NRRL 1006) (Penicillium stipitatum).